The chain runs to 445 residues: Phosphoglucosamine mutase (445 aa).

Serine 102 (phosphoserine intermediate) is an active-site residue. Mg(2+) is bound by residues serine 102, aspartate 241, aspartate 243, and aspartate 245. At serine 102 the chain carries Phosphoserine.

This sequence belongs to the phosphohexose mutase family. It depends on Mg(2+) as a cofactor. In terms of processing, activated by phosphorylation.

It catalyses the reaction alpha-D-glucosamine 1-phosphate = D-glucosamine 6-phosphate. Functionally, catalyzes the conversion of glucosamine-6-phosphate to glucosamine-1-phosphate. The sequence is that of Phosphoglucosamine mutase from Shewanella baltica (strain OS155 / ATCC BAA-1091).